Consider the following 238-residue polypeptide: Ribonuclease PH (238 aa).

Phosphate is bound by residues Arg86 and 124 to 126 (GTR).

This sequence belongs to the RNase PH family. In terms of assembly, homohexameric ring arranged as a trimer of dimers.

The enzyme catalyses tRNA(n+1) + phosphate = tRNA(n) + a ribonucleoside 5'-diphosphate. Functionally, phosphorolytic 3'-5' exoribonuclease that plays an important role in tRNA 3'-end maturation. Removes nucleotide residues following the 3'-CCA terminus of tRNAs; can also add nucleotides to the ends of RNA molecules by using nucleoside diphosphates as substrates, but this may not be physiologically important. Probably plays a role in initiation of 16S rRNA degradation (leading to ribosome degradation) during starvation. The protein is Ribonuclease PH of Salmonella agona (strain SL483).